We begin with the raw amino-acid sequence, 143 residues long: Nucleoside diphosphate kinase (143 aa).

ATP is bound by residues lysine 11, phenylalanine 59, arginine 87, threonine 93, arginine 104, and asparagine 114. The Pros-phosphohistidine intermediate role is filled by histidine 117.

It belongs to the NDK family. As to quaternary structure, homotetramer. Requires Mg(2+) as cofactor.

Its subcellular location is the cytoplasm. It carries out the reaction a 2'-deoxyribonucleoside 5'-diphosphate + ATP = a 2'-deoxyribonucleoside 5'-triphosphate + ADP. It catalyses the reaction a ribonucleoside 5'-diphosphate + ATP = a ribonucleoside 5'-triphosphate + ADP. Functionally, major role in the synthesis of nucleoside triphosphates other than ATP. The ATP gamma phosphate is transferred to the NDP beta phosphate via a ping-pong mechanism, using a phosphorylated active-site intermediate. The protein is Nucleoside diphosphate kinase of Shewanella oneidensis (strain ATCC 700550 / JCM 31522 / CIP 106686 / LMG 19005 / NCIMB 14063 / MR-1).